Reading from the N-terminus, the 500-residue chain is L-arabinose isomerase (500 aa).

Residues Glu306, Glu333, His350, and His450 each coordinate Mn(2+).

The protein belongs to the arabinose isomerase family. As to quaternary structure, homohexamer. The cofactor is Mn(2+).

It catalyses the reaction beta-L-arabinopyranose = L-ribulose. It participates in carbohydrate degradation; L-arabinose degradation via L-ribulose; D-xylulose 5-phosphate from L-arabinose (bacterial route): step 1/3. Catalyzes the conversion of L-arabinose to L-ribulose. This chain is L-arabinose isomerase, found in Salmonella enteritidis PT4 (strain P125109).